The following is a 350-amino-acid chain: Ceramide synthase 1 (350 aa).

A2 bears the N-acetylalanine mark. Transmembrane regions (helical) follow at residues 53-73 (AHLAAPELLLAVLCALGWTAL), 103-123 (AWKLLFYLACWSYCAYLLLGT), 148-168 (IAVAYLLQGSFYCHSIYATVY), 176-196 (SVVMLVHHVVTLLLIASSYAF), 239-259 (VANLGCLSFCFCWFWFRLYWF), and 287-307 (LLLLLMVMNIYWFLYIVAFAA). The region spanning 97 to 311 (ARLPESAWKL…IVAFAAKVLT (215 aa)) is the TLC domain.

Acetylated. Deacetylation by SIRT3 increases enzyme activity and promotes mitochondrial ceramide accumulation. Expressed in brain, skeletal muscle, heart and perigonadal white adipose tissue.

It localises to the endoplasmic reticulum membrane. It carries out the reaction a sphingoid base + octadecanoyl-CoA = an N-octadecanoyl-sphingoid base + CoA + H(+). It catalyses the reaction sphinganine + octadecanoyl-CoA = N-(octadecanoyl)-sphinganine + CoA + H(+). The catalysed reaction is hexadecasphinganine + octadecanoyl-CoA = N-octadecanoylhexadecasphinganine + CoA + H(+). The enzyme catalyses sphing-4-enine + octadecanoyl-CoA = N-octadecanoylsphing-4-enine + CoA + H(+). It carries out the reaction heptadecasphing-4-enine + octadecanoyl-CoA = N-octadecanoyl-heptadecasphing-4-enine + CoA + H(+). It catalyses the reaction 2-hydroxyoctadecanoyl-CoA + sphinganine = N-(2-hydroxyoctadecanoyl)-sphinganine + CoA + H(+). The catalysed reaction is eicosanoyl-CoA + sphinganine = N-eicosanoylsphinganine + CoA + H(+). Its pathway is lipid metabolism; sphingolipid metabolism. Inhibited by fumonisin B1. Functionally, ceramide synthase that catalyzes the transfer of the acyl chain from acyl-CoA to a sphingoid base, with high selectivity toward stearoyl-CoA (octadecanoyl-CoA; C18:0-CoA). N-acylates sphinganine and sphingosine bases to form dihydroceramides and ceramides in de novo synthesis and salvage pathways, respectively. Plays a predominant role in skeletal muscle in regulating C18 ceramide and dihydroceramide levels with an impact on whole-body glucose metabolism and insulin sensitivity. Protects from diet-induced obesity by suppressing the uptake of glucose in multiple organs in a FGF21-dependent way. Generates C18 ceramides in the brain, playing a critical role in cerebellar development and Purkinje cell function. In response to cellular stress mediates mitophagy, a known defense mechanism against cell transformation and aging. Upon mitochondria fission, generates C18 ceramides that anchor lipidated MAP1LC3B/LC3B-II autophagolysosomes to outer mitochondrial membranes to eliminate damaged mitochondria. The protein is Ceramide synthase 1 of Mus musculus (Mouse).